A 432-amino-acid polypeptide reads, in one-letter code: CBL-interacting serine/threonine-protein kinase 17 (432 aa).

One can recognise a Protein kinase domain in the interval 11–266 (YELGRTLGEG…IAGIKAHDWF (256 aa)). Residues 17-25 (LGEGNSAKV) and K40 contribute to the ATP site. D134 serves as the catalytic Proton acceptor. Positions 152–181 (DFGLSALSQHYREDGLLHTTCGSPNYVAPE) are activation loop. A Phosphoserine modification is found at S156. Position 170 is a phosphothreonine (T170). The NAF domain occupies 301–325 (DSPTIINAFQLIGMSSFLDLSGFFE). The PPI stretch occupies residues 331–360 (ERQIRFTSNSLAKDLLENIETIFTEMGFCL).

Belongs to the protein kinase superfamily. CAMK Ser/Thr protein kinase family. SNF1 subfamily. Interacts with CBL1. Requires Mn(2+) as cofactor.

It catalyses the reaction L-seryl-[protein] + ATP = O-phospho-L-seryl-[protein] + ADP + H(+). The enzyme catalyses L-threonyl-[protein] + ATP = O-phospho-L-threonyl-[protein] + ADP + H(+). Functionally, CIPK serine-threonine protein kinases interact with CBL proteins. Binding of a CBL protein to the regulatory NAF domain of CIPK protein lead to the activation of the kinase in a calcium-dependent manner. The protein is CBL-interacting serine/threonine-protein kinase 17 (CIPK17) of Arabidopsis thaliana (Mouse-ear cress).